Consider the following 272-residue polypeptide: Phosphoglycolate phosphatase (272 aa).

Catalysis depends on aspartate 19, which acts as the Nucleophile. The Mg(2+) site is built by aspartate 19, aspartate 21, and aspartate 182.

The protein belongs to the HAD-like hydrolase superfamily. CbbY/CbbZ/Gph/YieH family. Mg(2+) is required as a cofactor.

It catalyses the reaction 2-phosphoglycolate + H2O = glycolate + phosphate. It functions in the pathway organic acid metabolism; glycolate biosynthesis; glycolate from 2-phosphoglycolate: step 1/1. Specifically catalyzes the dephosphorylation of 2-phosphoglycolate. Is involved in the dissimilation of the intracellular 2-phosphoglycolate formed during the DNA repair of 3'-phosphoglycolate ends, a major class of DNA lesions induced by oxidative stress. The chain is Phosphoglycolate phosphatase from Pseudomonas putida (strain ATCC 47054 / DSM 6125 / CFBP 8728 / NCIMB 11950 / KT2440).